The sequence spans 230 residues: MAHPTQLGFKDAAMPVMEELLHFHDHALMIVLLISTLVLYIITAMVSTKLTNKYILDSQEIEIVWTILPAVILVLIALPSLRILYLMDEINDPHLTIKAMGHQWYWSYEYTDYENLGFDSYMVPTQDLAPGQFRLLETDHRMVVPMESPVRVLVSAEDVLHSWAVPSLGVKMDAVPGRLNQAAFIASRPGVFYGQCSEICGANHSFMPIVVEAVPLEHFENWSSLMLEDA.

Residues 1–14 (MAHPTQLGFKDAAM) lie on the Mitochondrial intermembrane side of the membrane. The chain crosses the membrane as a helical span at residues 15-45 (PVMEELLHFHDHALMIVLLISTLVLYIITAM). Topologically, residues 46–59 (VSTKLTNKYILDSQ) are mitochondrial matrix. Residues 60–87 (EIEIVWTILPAVILVLIALPSLRILYLM) traverse the membrane as a helical segment. At 88–230 (DEINDPHLTI…NWSSLMLEDA (143 aa)) the chain is on the mitochondrial intermembrane side. Residues H161, C196, E198, C200, H204, and M207 each contribute to the Cu cation site. Mg(2+) is bound at residue E198.

It belongs to the cytochrome c oxidase subunit 2 family. As to quaternary structure, component of the cytochrome c oxidase (complex IV, CIV), a multisubunit enzyme composed of 14 subunits. The complex is composed of a catalytic core of 3 subunits MT-CO1, MT-CO2 and MT-CO3, encoded in the mitochondrial DNA, and 11 supernumerary subunits COX4I, COX5A, COX5B, COX6A, COX6B, COX6C, COX7A, COX7B, COX7C, COX8 and NDUFA4, which are encoded in the nuclear genome. The complex exists as a monomer or a dimer and forms supercomplexes (SCs) in the inner mitochondrial membrane with NADH-ubiquinone oxidoreductase (complex I, CI) and ubiquinol-cytochrome c oxidoreductase (cytochrome b-c1 complex, complex III, CIII), resulting in different assemblies (supercomplex SCI(1)III(2)IV(1) and megacomplex MCI(2)III(2)IV(2)). Found in a complex with TMEM177, COA6, COX18, COX20, SCO1 and SCO2. Interacts with TMEM177 in a COX20-dependent manner. Interacts with COX20. Interacts with COX16. It depends on Cu cation as a cofactor.

It localises to the mitochondrion inner membrane. It catalyses the reaction 4 Fe(II)-[cytochrome c] + O2 + 8 H(+)(in) = 4 Fe(III)-[cytochrome c] + 2 H2O + 4 H(+)(out). In terms of biological role, component of the cytochrome c oxidase, the last enzyme in the mitochondrial electron transport chain which drives oxidative phosphorylation. The respiratory chain contains 3 multisubunit complexes succinate dehydrogenase (complex II, CII), ubiquinol-cytochrome c oxidoreductase (cytochrome b-c1 complex, complex III, CIII) and cytochrome c oxidase (complex IV, CIV), that cooperate to transfer electrons derived from NADH and succinate to molecular oxygen, creating an electrochemical gradient over the inner membrane that drives transmembrane transport and the ATP synthase. Cytochrome c oxidase is the component of the respiratory chain that catalyzes the reduction of oxygen to water. Electrons originating from reduced cytochrome c in the intermembrane space (IMS) are transferred via the dinuclear copper A center (CU(A)) of subunit 2 and heme A of subunit 1 to the active site in subunit 1, a binuclear center (BNC) formed by heme A3 and copper B (CU(B)). The BNC reduces molecular oxygen to 2 water molecules using 4 electrons from cytochrome c in the IMS and 4 protons from the mitochondrial matrix. This Cyprinus carpio (Common carp) protein is Cytochrome c oxidase subunit 2 (mt-co2).